A 340-amino-acid chain; its full sequence is DNA primase large subunit PriL (340 aa).

Positions 229, 301, 310, and 318 each coordinate [4Fe-4S] cluster.

It belongs to the eukaryotic-type primase large subunit family. As to quaternary structure, heterodimer of a small subunit (PriS) and a large subunit (PriL). Requires [4Fe-4S] cluster as cofactor.

In terms of biological role, regulatory subunit of DNA primase, an RNA polymerase that catalyzes the synthesis of short RNA molecules used as primers for DNA polymerase during DNA replication. Stabilizes and modulates the activity of the small subunit, increasing the rate of DNA synthesis, and conferring RNA synthesis capability. The DNA polymerase activity may enable DNA primase to also catalyze primer extension after primer synthesis. May also play a role in DNA repair. The sequence is that of DNA primase large subunit PriL from Thermoplasma acidophilum (strain ATCC 25905 / DSM 1728 / JCM 9062 / NBRC 15155 / AMRC-C165).